We begin with the raw amino-acid sequence, 222 residues long: UPF0502 protein XCV4380 (222 aa).

It belongs to the UPF0502 family.

This chain is UPF0502 protein XCV4380, found in Xanthomonas euvesicatoria pv. vesicatoria (strain 85-10) (Xanthomonas campestris pv. vesicatoria).